A 735-amino-acid chain; its full sequence is Protein argonaute (735 aa).

Residues Met-1–Asp-94 form an N-terminal domain region. The tract at residues Cys-95 to Pro-180 is linker L1. The PAZ domain stretch occupies residues Trp-181–Ala-284. A linker L2 region spans residues Lys-285–Gly-369. The mid domain stretch occupies residues Cys-370–Ile-498. The interval Gln-499–Val-735 is PIWI domain. Active-site residues include Asp-516, Glu-550, Asp-584, and Asp-709. Position 516 (Asp-516) interacts with Mn(2+). Residues Asp-584, Asp-709, and Val-735 each coordinate Mn(2+).

Belongs to the argonaute family. Long pAgo subfamily. As to quaternary structure, copurifies with SSB proteins Synpcc7942_0079 and Synpcc7942_0301 as well as other proteins. Requires Mn(2+) as cofactor.

In terms of biological role, a DNA-guided ssDNA endonuclease that might play a role in defense against invading mobile genetic elements. Uses short ssDNA sequences as guides (gDNA) to bind complementary target strands, resulting in cleavage of the target DNA (tDNA). The cleavage site is 10 nucleotides (nt) downstream of the target residue base-paired with the 5'-end of the gDNA. Both 5'-P and 5'-OH gDNAs confer activity; a 5'-OH guide cleaves between nt 10-11 and nt 11-12. Guide DNA mismatches in the seed (nt 2-9) can enhance activity, mismatches 1-5 nt after the cleavage site block activity. Has no appreciable activity with guide RNA or on target RNA. In situ binds to 5'-phosphorylated DNA 14-20 nt in length; small DNA maps over the chromosome and plasmid with some preference for the replication origin and the probable termination site. Also has weak guide-independent nuclease activity on DNA called 'chopping'. Overexpression of wild-type or catalytically inactive mutant has no visible effect during growth under continuous high light for up to a month. This is Protein argonaute from Synechococcus elongatus (strain ATCC 33912 / PCC 7942 / FACHB-805) (Anacystis nidulans R2).